Here is a 315-residue protein sequence, read N- to C-terminus: Methionyl-tRNA formyltransferase (315 aa).

113–116 (SILP) provides a ligand contact to (6S)-5,6,7,8-tetrahydrofolate.

Belongs to the Fmt family.

It carries out the reaction L-methionyl-tRNA(fMet) + (6R)-10-formyltetrahydrofolate = N-formyl-L-methionyl-tRNA(fMet) + (6S)-5,6,7,8-tetrahydrofolate + H(+). Attaches a formyl group to the free amino group of methionyl-tRNA(fMet). The formyl group appears to play a dual role in the initiator identity of N-formylmethionyl-tRNA by promoting its recognition by IF2 and preventing the misappropriation of this tRNA by the elongation apparatus. In Vibrio parahaemolyticus serotype O3:K6 (strain RIMD 2210633), this protein is Methionyl-tRNA formyltransferase.